Here is a 446-residue protein sequence, read N- to C-terminus: Transcriptional regulator STERILE APETALA (446 aa).

Residues 1–10 (MSTSSSSSDN) show a composition bias toward low complexity. The interval 1 to 32 (MSTSSSSSDNGAGGSGGVFEAPSPSRPRRGAN) is disordered.

As to expression, expressed in inflorescence and floral meristems, young floral organ primordia, and later in ovule primordia.

The protein localises to the nucleus. In terms of biological role, transcriptional regulator involved in the specification of floral identity. Acts as A class cadastral protein by repressing the C class floral homeotic gene AGAMOUS in the external flower organs in association with APETALA2 and other repressors. Is required to maintain floral meristem identity in concert with AGAMOUS. Also interacts with APETALA2 to ensure the normal development of ovule. The chain is Transcriptional regulator STERILE APETALA (SAP) from Arabidopsis thaliana (Mouse-ear cress).